Reading from the N-terminus, the 857-residue chain is MEAGPSGAAAGAYLPPLQQVFQAPRRPGIGTVGKPIKLLANYFEVDIPKIDVYHYEVDIKPDKCPRRVNREVVEYMVQHFKPQIFGDRKPVYDGKKNIYTVTALPIGNERVDFEVTIPGEGKDRIFKVSIKWLAIVSWRMLHEALVSGQIPVPLESVQALDVAMRHLASMRYTPVGRSFFSPPEGYYHPLGGGREVWFGFHQSVRPAMWKMMLNIDVSATAFYKAQPVIEFMCEVLDIRNIDEQPKPLTDSQRVRFTKEIKGLKVEVTHCGQMKRKYRVCNVTRRPASHQTFPLQLESGQTVECTVAQYFKQKYNLQLKYPHLPCLQVGQEQKHTYLPLEVCNIVAGQRCIKKLTDNQTSTMIKATARSAPDRQEEISRLMKNASYNLDPYIQEFGIKVKDDMTEVTGRVLPAPILQYGGRNRAIATPNQGVWDMRGKQFYNGIEIKVWAIACFAPQKQCREEVLKNFTDQLRKISKDAGMPIQGQPCFCKYAQGADSVEPMFRHLKNTYSGLQLIIVILPGKTPVYAEVKRVGDTLLGMATQCVQVKNVVKTSPQTLSNLCLKINVKLGGINNILVPHQRSAVFQQPVIFLGADVTHPPAGDGKKPSITAVVGSMDAHPSRYCATVRVQRPRQEIIEDLSYMVRELLIQFYKSTRFKPTRIIFYRDGVPEGQLPQILHYELLAIRDACIKLEKDYQPGITYIVVQKRHHTRLFCADKNERIGKSGNIPAGTTVDTNITHPFEFDFYLCSHAGIQGTSRPSHYYVLWDDNRFTADELQILTYQLCHTYVRCTRSVSIPAPAYYARLVAFRARYHLVDKEHDSGEGSHISGQSNGRDPQALAKAVQVHQDTLRTMYFA.

In terms of domain architecture, PAZ spans 227–346 (PVIEFMCEVL…LPLEVCNIVA (120 aa)). Interaction with guide RNA regions lie at residues 309-314 (YFKQKY) and 522-564 (GKTP…LCLK). Residues 515-816 (LIIVILPGKT…VAFRARYHLV (302 aa)) enclose the Piwi domain. Positions 670-675 (PEGQLP) are impairs access of bound RNA to the active site. 3 interaction with guide RNA regions span residues 708 to 712 (RHHTR), 751 to 759 (HAGIQGTSR), and 788 to 813 (YVRC…RARY).

The protein belongs to the argonaute family. Ago subfamily. As to quaternary structure, interacts with DDB1, DDX5, DDX6, DHX30, DHX36, DDX47, DICER1, AGO2, ELAVL1, HNRNPF, IGF2BP1, ILF3, IMP8, MATR3, MOV10, PABPC1, PRMT5, RBM4, SART3, TNRC6B, UPF1 and YBX1. Associates with polysomes and messenger ribonucleoproteins (mNRPs). Interacts with LIMD1, WTIP and AJUBA. Interacts with APOBEC3F, APOBEC3G and APOBEC3H. Ubiquitinated on surface-exposed lysines by a SCF-like E3 ubiquitin-protein ligase complex containing ZSWIM8 during target-directed microRNA degradation (TDMD), a process that mediates degradation of microRNAs (miRNAs). Ubiquitination by the SCF-like E3 ubiquitin-protein ligase complex containing ZSWIM8 leads to its subsequent degradation, thereby exposing miRNAs for degradation. ZSWIM8 recognizes and binds AGO1 when it is engaged with a TDMD target.

It localises to the cytoplasm. The protein resides in the P-body. Required for RNA-mediated gene silencing (RNAi). Binds to short RNAs such as microRNAs (miRNAs) or short interfering RNAs (siRNAs), and represses the translation of mRNAs which are complementary to them. Lacks endonuclease activity and does not appear to cleave target mRNAs. Also required for transcriptional gene silencing (TGS) of promoter regions which are complementary to bound short antigene RNAs (agRNAs). The polypeptide is Protein argonaute-1 (AGO1) (Homo sapiens (Human)).